A 164-amino-acid chain; its full sequence is Flavodoxin (164 aa).

Residues 4-160 (IGIFFGTDSG…RISKWVEQVK (157 aa)) form the Flavodoxin-like domain.

This sequence belongs to the flavodoxin family. Requires FMN as cofactor.

Functionally, low-potential electron donor to a number of redox enzymes. This Helicobacter pylori (strain ATCC 700392 / 26695) (Campylobacter pylori) protein is Flavodoxin (fldA).